The sequence spans 142 residues: uncharacterized protein (142 aa).

This is an uncharacterized protein from Pseudomonas putida (Arthrobacter siderocapsulatus).